Reading from the N-terminus, the 448-residue chain is Tubulin alpha chain (448 aa).

Residues Gln-12, Glu-73, Ser-142, Gly-146, Thr-147, Thr-181, Asn-208, and Asn-230 each coordinate GTP. Glu-73 contributes to the Mg(2+) binding site. Glu-256 is a catalytic residue.

This sequence belongs to the tubulin family. As to quaternary structure, dimer of alpha and beta chains. A typical microtubule is a hollow water-filled tube with an outer diameter of 25 nm and an inner diameter of 15 nM. Alpha-beta heterodimers associate head-to-tail to form protofilaments running lengthwise along the microtubule wall with the beta-tubulin subunit facing the microtubule plus end conferring a structural polarity. Microtubules usually have 13 protofilaments but different protofilament numbers can be found in some organisms and specialized cells. The cofactor is Mg(2+).

The protein localises to the cytoplasm. It is found in the cytoskeleton. The enzyme catalyses GTP + H2O = GDP + phosphate + H(+). In terms of biological role, tubulin is the major constituent of microtubules, a cylinder consisting of laterally associated linear protofilaments composed of alpha- and beta-tubulin heterodimers. Microtubules grow by the addition of GTP-tubulin dimers to the microtubule end, where a stabilizing cap forms. Below the cap, tubulin dimers are in GDP-bound state, owing to GTPase activity of alpha-tubulin. The polypeptide is Tubulin alpha chain (TUB1) (Eremothecium gossypii (strain ATCC 10895 / CBS 109.51 / FGSC 9923 / NRRL Y-1056) (Yeast)).